Here is a 295-residue protein sequence, read N- to C-terminus: MTESLDLVIITGMSGAGKTVAMQAFEDLGYFCVDNMPPALLPKFWELVKESGKITKVALVVDLRSRAFYDQIIDMLANLDNNAYVHSRILFLDATDEELVSRYKETRRSHPLAMEGRLMDGIKKERALLTELRNRAQVVIDTTTLSPRQLREKIFLNFKESGSQPAFHIEVMSFGFKYGLPIDADIVMDVRFLPNPFYIKDYRPKTGLDPEVYNYVMDNEDAESFYNKFYDLLSEIMPKYKAEGKTSVTIAIGCTGGQHRSVAFAERIGKAFSDAYAVDITHRDIKKHKETVNRS.

12–19 (GMSGAGKT) serves as a coordination point for ATP. 62–65 (DLRS) contacts GTP.

This sequence belongs to the RapZ-like family.

Its function is as follows. Displays ATPase and GTPase activities. The sequence is that of Nucleotide-binding protein LSEI_0959 from Lacticaseibacillus paracasei (strain ATCC 334 / BCRC 17002 / CCUG 31169 / CIP 107868 / KCTC 3260 / NRRL B-441) (Lactobacillus paracasei).